The sequence spans 281 residues: Diaminopimelate epimerase (281 aa).

Substrate-binding residues include asparagine 13 and asparagine 66. Residue cysteine 75 is the Proton donor of the active site. Substrate-binding positions include 76–77 (GN), asparagine 164, asparagine 197, and 215–216 (ER). Cysteine 224 functions as the Proton acceptor in the catalytic mechanism. 225 to 226 (GT) contributes to the substrate binding site.

This sequence belongs to the diaminopimelate epimerase family. Homodimer.

It is found in the cytoplasm. It carries out the reaction (2S,6S)-2,6-diaminopimelate = meso-2,6-diaminopimelate. It participates in amino-acid biosynthesis; L-lysine biosynthesis via DAP pathway; DL-2,6-diaminopimelate from LL-2,6-diaminopimelate: step 1/1. Catalyzes the stereoinversion of LL-2,6-diaminopimelate (L,L-DAP) to meso-diaminopimelate (meso-DAP), a precursor of L-lysine and an essential component of the bacterial peptidoglycan. The protein is Diaminopimelate epimerase of Gloeothece citriformis (strain PCC 7424) (Cyanothece sp. (strain PCC 7424)).